Here is a 175-residue protein sequence, read N- to C-terminus: Adenine phosphoribosyltransferase (175 aa).

This sequence belongs to the purine/pyrimidine phosphoribosyltransferase family. As to quaternary structure, homodimer.

The protein localises to the cytoplasm. It catalyses the reaction AMP + diphosphate = 5-phospho-alpha-D-ribose 1-diphosphate + adenine. The protein operates within purine metabolism; AMP biosynthesis via salvage pathway; AMP from adenine: step 1/1. Functionally, catalyzes a salvage reaction resulting in the formation of AMP, that is energically less costly than de novo synthesis. The polypeptide is Adenine phosphoribosyltransferase (Lactobacillus delbrueckii subsp. bulgaricus (strain ATCC 11842 / DSM 20081 / BCRC 10696 / JCM 1002 / NBRC 13953 / NCIMB 11778 / NCTC 12712 / WDCM 00102 / Lb 14)).